The primary structure comprises 354 residues: Neuronal growth regulator 1 (354 aa).

A signal peptide spans Met1–Ser37. Ig-like C2-type domains lie at Val38 to Thr134, Pro139 to Val221, and Pro225 to Asn313. Residues Cys60 and Cys118 are joined by a disulfide bond. N-linked (GlcNAc...) asparagine glycans are attached at residues Asn73 and Asn155. Cystine bridges form between Cys160-Cys203 and Cys245-Cys297. Residue Tyr187 is modified to Phosphotyrosine. N-linked (GlcNAc...) asparagine glycosylation is found at Asn275, Asn286, Asn294, and Asn307. Residue Gly324 is the site of GPI-anchor amidated glycine attachment. A propeptide spans Ser325–Gln354 (removed in mature form).

Belongs to the immunoglobulin superfamily. IgLON family.

The protein localises to the cell membrane. Functionally, may be involved in cell-adhesion. May function as a trans-neural growth-promoting factor in regenerative axon sprouting in the mammalian brain. The chain is Neuronal growth regulator 1 (NEGR1) from Homo sapiens (Human).